A 1322-amino-acid polypeptide reads, in one-letter code: Protein fantom (1322 aa).

Residues 1–22 (MVSARYPIEKWSRPQLEDHFHN) form the signal peptide. Residues 15–89 (QLEDHFHNVV…MKLKAAKQQL (75 aa)) are a coiled coil. Polar residues predominate over residues 108-119 (RSTFRQPPSTFR). Disordered regions lie at residues 108 to 151 (RSTF…GEKL), 189 to 275 (KSSV…PDQT), and 392 to 418 (RIEE…SQSE). Low complexity predominate over residues 195–217 (SSPPTRLSTSSSSKSSSSNNNND). Acidic residues predominate over residues 224-234 (ELEEMSEMSDD). A coiled-coil region spans residues 274–362 (QTEKVLLDKL…EDQKKFEAMR (89 aa)). The stretch at 456-538 (ASENSLARWQ…FMLEEQIRTI (83 aa)) forms a coiled coil. 2 disordered regions span residues 891-1094 (AELH…KPRN) and 1121-1149 (TDPL…PVPL). The segment covering 918–927 (TDSSDTSFSH) has biased composition (low complexity). The span at 956–975 (SDGEEEADRIVFDDDDDEIE) shows a compositional bias: acidic residues. Basic and acidic residues predominate over residues 984 to 996 (RDPEPLEVPERQV). Over residues 1015–1029 (NGTNESKESTPVTQR) the composition is skewed to polar residues. The segment covering 1042-1067 (PELEPESGPEPEPVVESEPNEVAETE) has biased composition (acidic residues). Residues 1068 to 1080 (EDRKRELKTEELK) are compositionally biased toward basic and acidic residues. Positions 1127 to 1139 (SVPPSESSSTSSP) are enriched in low complexity.

It belongs to the RPGRIP1 family. Expressed at the transition zone at the base of cilia. Expressed in ciliated sensory neurons, including the amphid neurons in the head.

The protein localises to the cell projection. The protein resides in the cilium. Thought to have an important role in cilia formation and cilia-mediated chemosensation. Involved in the docking of other MKS/MKSR proteins localized to the transition zone of the cilia. The polypeptide is Protein fantom (mks-5) (Caenorhabditis elegans).